Reading from the N-terminus, the 424-residue chain is Enolase (424 aa).

Q163 contacts (2R)-2-phosphoglycerate. E204 acts as the Proton donor in catalysis. Mg(2+)-binding residues include D241, E284, and D311. (2R)-2-phosphoglycerate is bound by residues K336, R365, S366, and K387. K336 serves as the catalytic Proton acceptor.

The protein belongs to the enolase family. Mg(2+) is required as a cofactor.

The protein localises to the cytoplasm. Its subcellular location is the secreted. It is found in the cell surface. The enzyme catalyses (2R)-2-phosphoglycerate = phosphoenolpyruvate + H2O. Its pathway is carbohydrate degradation; glycolysis; pyruvate from D-glyceraldehyde 3-phosphate: step 4/5. Its function is as follows. Catalyzes the reversible conversion of 2-phosphoglycerate (2-PG) into phosphoenolpyruvate (PEP). It is essential for the degradation of carbohydrates via glycolysis. The sequence is that of Enolase from Dictyoglomus thermophilum (strain ATCC 35947 / DSM 3960 / H-6-12).